We begin with the raw amino-acid sequence, 598 residues long: Aspartate--tRNA(Asp/Asn) ligase (598 aa).

Residue Glu-177 participates in L-aspartate binding. Residues 201–204 are aspartate; sequence QLFK. Arg-223 is a binding site for L-aspartate. ATP-binding positions include 223–225 and Gln-232; that span reads RDE. His-456 contributes to the L-aspartate binding site. Glu-493 provides a ligand contact to ATP. Residue Arg-500 coordinates L-aspartate. 545–548 is an ATP binding site; sequence GLDR.

The protein belongs to the class-II aminoacyl-tRNA synthetase family. Type 1 subfamily. As to quaternary structure, homodimer.

The protein localises to the cytoplasm. The catalysed reaction is tRNA(Asx) + L-aspartate + ATP = L-aspartyl-tRNA(Asx) + AMP + diphosphate. In terms of biological role, aspartyl-tRNA synthetase with relaxed tRNA specificity since it is able to aspartylate not only its cognate tRNA(Asp) but also tRNA(Asn). Reaction proceeds in two steps: L-aspartate is first activated by ATP to form Asp-AMP and then transferred to the acceptor end of tRNA(Asp/Asn). This is Aspartate--tRNA(Asp/Asn) ligase from Prochlorococcus marinus (strain MIT 9215).